The chain runs to 388 residues: 3-dehydroquinate synthase (388 aa).

It belongs to the archaeal-type DHQ synthase family.

The enzyme catalyses 2-amino-2,3,7-trideoxy-D-lyxo-hept-6-ulosonate + NAD(+) + H2O = 3-dehydroquinate + NH4(+) + NADH + H(+). Catalyzes the oxidative deamination and cyclization of 2-amino-3,7-dideoxy-D-threo-hept-6-ulosonic acid (ADH) to yield 3-dehydroquinate (DHQ), which is fed into the canonical shikimic pathway of aromatic amino acid biosynthesis. The polypeptide is 3-dehydroquinate synthase (Haloarcula marismortui (strain ATCC 43049 / DSM 3752 / JCM 8966 / VKM B-1809) (Halobacterium marismortui)).